The following is a 623-amino-acid chain: ATPase expression protein 3 (623 aa).

PPR repeat units lie at residues 217 to 251 (SVQC…GCKP), 252 to 292 (NTTT…NGIF), 362 to 396 (NLKF…QLKF), 405 to 439 (NSET…LVGP), and 445 to 479 (NVNT…SERY).

Its subcellular location is the mitochondrion inner membrane. Functionally, required for respiration. This is ATPase expression protein 3 (AEP3) from Candida glabrata (strain ATCC 2001 / BCRC 20586 / JCM 3761 / NBRC 0622 / NRRL Y-65 / CBS 138) (Yeast).